Reading from the N-terminus, the 848-residue chain is Trimethylamine-N-oxide reductase 1 (848 aa).

The tat-type signal signal peptide spans 1–39; it reads MNNNDLFQASRRRFLAQLGGLTVAGMLGTSLLTPRRATA. Residue Ser-191 participates in Mo-bis(molybdopterin guanine dinucleotide) binding.

Belongs to the prokaryotic molybdopterin-containing oxidoreductase family. It depends on Mo-bis(molybdopterin guanine dinucleotide) as a cofactor. In terms of processing, predicted to be exported by the Tat system. The position of the signal peptide cleavage has not been experimentally proven.

It localises to the periplasm. The catalysed reaction is trimethylamine + 2 Fe(III)-[cytochrome c] + H2O = trimethylamine N-oxide + 2 Fe(II)-[cytochrome c] + 3 H(+). Functionally, reduces trimethylamine-N-oxide (TMAO) into trimethylamine; an anaerobic reaction coupled to energy-yielding reactions. In Escherichia coli O6:H1 (strain CFT073 / ATCC 700928 / UPEC), this protein is Trimethylamine-N-oxide reductase 1 (torA).